Here is a 461-residue protein sequence, read N- to C-terminus: Serine carboxypeptidase-like 51 (461 aa).

A signal peptide spans 1-20; the sequence is MKTTVVYLVILCLIVSCTNG. N-linked (GlcNAc...) asparagine glycans are attached at residues Asn-99 and Asn-152. The active site involves Ser-166. Residue Asn-340 is glycosylated (N-linked (GlcNAc...) asparagine). Catalysis depends on residues Asp-379 and His-438.

Belongs to the peptidase S10 family. As to expression, expressed in seedlings, roots, flowers and siliques.

It is found in the secreted. Probable carboxypeptidase. The polypeptide is Serine carboxypeptidase-like 51 (SCPL51) (Arabidopsis thaliana (Mouse-ear cress)).